The sequence spans 167 residues: S-ribosylhomocysteine lyase (167 aa).

Fe cation contacts are provided by H54, H58, and C128.

This sequence belongs to the LuxS family. As to quaternary structure, homodimer. Fe cation is required as a cofactor.

The catalysed reaction is S-(5-deoxy-D-ribos-5-yl)-L-homocysteine = (S)-4,5-dihydroxypentane-2,3-dione + L-homocysteine. Functionally, involved in the synthesis of autoinducer 2 (AI-2) which is secreted by bacteria and is used to communicate both the cell density and the metabolic potential of the environment. The regulation of gene expression in response to changes in cell density is called quorum sensing. Catalyzes the transformation of S-ribosylhomocysteine (RHC) to homocysteine (HC) and 4,5-dihydroxy-2,3-pentadione (DPD). This chain is S-ribosylhomocysteine lyase, found in Haemophilus influenzae (strain 86-028NP).